The following is a 240-amino-acid chain: Fatty acid metabolism regulator protein (240 aa).

Positions 6-74 constitute an HTH gntR-type domain; sequence KGPASFAEKY…HGKPTRVNNF (69 aa). A DNA-binding region (H-T-H motif) is located at residues 34-53; sequence ERELSELIGVTRTTLREVLQ.

In terms of assembly, homodimer.

It is found in the cytoplasm. Functionally, multifunctional regulator of fatty acid metabolism. The chain is Fatty acid metabolism regulator protein from Shewanella amazonensis (strain ATCC BAA-1098 / SB2B).